We begin with the raw amino-acid sequence, 179 residues long: CASP-like protein 1F1 (179 aa).

Over 1-16 (MENVEDKYNSPLKSQK) the chain is Cytoplasmic. The chain crosses the membrane as a helical span at residues 17-37 (LFIGAQICLRIVTIGATLAAT). Residues 38-65 (WIMVTDKQSITFGDFVMVAKYNYSSAFK) are Extracellular-facing. Residue N59 is glycosylated (N-linked (GlcNAc...) asparagine). The chain crosses the membrane as a helical span at residues 66–86 (FFVLANVIACACSVVSLLFLC). The Cytoplasmic segment spans residues 87–105 (ALGRYSSNPGHVFLLFLHD). The helical transmembrane segment at 106–126 (LLMMSLVLAGCSAATAIGFLG) threads the bilayer. The Extracellular portion of the chain corresponds to 127 to 150 (KYGNTKSGWMPICDQFGQFCNRGT). A helical transmembrane segment spans residues 151 to 171 (ISMMLSYLSMVCLLILTVTSA). At 172–179 (NKSRQIHV) the chain is on the cytoplasmic side.

This sequence belongs to the Casparian strip membrane proteins (CASP) family. As to quaternary structure, homodimer and heterodimers.

Its subcellular location is the cell membrane. This is CASP-like protein 1F1 from Ricinus communis (Castor bean).